The following is a 166-amino-acid chain: Urease accessory protein UreE 2 (166 aa).

Residues glutamate 135–asparagine 154 are disordered.

This sequence belongs to the UreE family.

It localises to the cytoplasm. Functionally, involved in urease metallocenter assembly. Binds nickel. Probably functions as a nickel donor during metallocenter assembly. The protein is Urease accessory protein UreE 2 of Pseudomonas syringae pv. syringae (strain B728a).